The chain runs to 164 residues: C-phycoerythrin alpha chain (164 aa).

(2R,3E)-phycoerythrobilin is bound by residues Cys82 and Cys139.

Belongs to the phycobiliprotein family. Heterodimer of an alpha and a beta chain. Contains two covalently linked bilin chromophores.

It is found in the cellular thylakoid membrane. Light-harvesting photosynthetic bile pigment-protein from the phycobiliprotein complex. This Microchaete diplosiphon (Fremyella diplosiphon) protein is C-phycoerythrin alpha chain (cpeA).